Reading from the N-terminus, the 335-residue chain is NADH-quinone oxidoreductase subunit H (335 aa).

8 helical membrane passes run 11 to 31 (VIIS…AGAL), 81 to 101 (VIFT…FAVI), 114 to 134 (IGLL…LFAG), 154 to 174 (VSYE…VGSF), 187 to 207 (LWFI…GVAV), 238 to 258 (FFVG…TLFF), 270 to 290 (QLAF…FILL), and 309 to 329 (FCLP…LLNT).

It belongs to the complex I subunit 1 family. In terms of assembly, NDH-1 is composed of 13 different subunits. Subunits NuoA, H, J, K, L, M, N constitute the membrane sector of the complex.

Its subcellular location is the cell inner membrane. It catalyses the reaction a quinone + NADH + 5 H(+)(in) = a quinol + NAD(+) + 4 H(+)(out). Its function is as follows. NDH-1 shuttles electrons from NADH, via FMN and iron-sulfur (Fe-S) centers, to quinones in the respiratory chain. The immediate electron acceptor for the enzyme in this species is believed to be ubiquinone. Couples the redox reaction to proton translocation (for every two electrons transferred, four hydrogen ions are translocated across the cytoplasmic membrane), and thus conserves the redox energy in a proton gradient. This subunit may bind ubiquinone. This is NADH-quinone oxidoreductase subunit H from Pseudomonas fluorescens (strain SBW25).